The sequence spans 195 residues: uncharacterized protein (195 aa).

Positions M1 to A17 are cleaved as a signal peptide. The N-linked (GlcNAc...) asparagine glycan is linked to N75.

It localises to the secreted. This is an uncharacterized protein from Arthroderma benhamiae (strain ATCC MYA-4681 / CBS 112371) (Trichophyton mentagrophytes).